Here is a 361-residue protein sequence, read N- to C-terminus: Inhibin alpha chain (361 aa).

An N-terminal signal peptide occupies residues 1-21 (MLPLLLPLQLLLLMVMKGGHG). The propeptide occupies 22 to 64 (CQGPELDRELVLAKVRALVLDALGPPNASKDGGKPVAQRLTRR). The tract at residues 45–82 (GPPNASKDGGKPVAQRLTRRHAHTGGSTRRSMENEDED) is disordered. N-linked (GlcNAc...) asparagine glycans are attached at residues asparagine 48, asparagine 144, and asparagine 266. Residues 65–230 (HAHTGGSTRR…PPSVGERARR (166 aa)) constitute a propeptide, inhibin alpha N-terminal region. Intrachain disulfides connect cysteine 260/cysteine 323, cysteine 289/cysteine 358, and cysteine 293/cysteine 360.

Belongs to the TGF-beta family. As to quaternary structure, dimeric, linked by one or more disulfide bonds. Activin B is a dimer of alpha and beta-B. Inhibin A is a dimer of alpha and beta-A. Inhibin B is a dimer of alpha and beta-B. Interacts with TGFBR3L; this interaction regulates female fertility. Proteolytic processing yields a number of bioactive forms, consisting either solely of the mature alpha chain, of the most N-terminal propeptide linked through a disulfide bond to the mature alpha chain, or of the entire proprotein.

The protein localises to the secreted. Its function is as follows. Inhibins and activins inhibit and activate, respectively, the secretion of follitropin by the pituitary gland. Inhibins/activins are involved in regulating a number of diverse functions such as hypothalamic and pituitary hormone secretion, gonadal hormone secretion, germ cell development and maturation, erythroid differentiation, insulin secretion, nerve cell survival, embryonic axial development or bone growth, depending on their subunit composition. Inhibins appear to oppose the functions of activins. Inhibin A is a dimer of alpha/INHA and beta-A/INHBA that functions as a feedback regulator in the hypothalamic-pituitary-gonadal (HPG) axis. Inhibits the secretion of FSH from the anterior pituitary gland by acting on pituitary gonadotrope cells. Antagonizes activin A by binding to the proteoglycan, betaglycan, and forming a stable complex with and, thereby, sequestering type II activin receptors while excluding type I receptor. In terms of biological role, inhibin B is a dimer of alpha and beta-B that plays a crucial role in the regulation of the reproductive system by inhibiting the secretion of follicle-stimulating hormone (FSH) from the anterior pituitary gland. Thereby, maintains reproductive homeostasis in both males and females. Acts as a more potent suppressor of FSH release than inhibin A. Functions as competitive receptor antagonist binding activin type II receptors with high affinity in the presence of the TGF-beta type III coreceptor/TGFBR3L. This chain is Inhibin alpha chain (INHA), found in Trichosurus vulpecula (Brush-tailed possum).